A 447-amino-acid chain; its full sequence is Phosphoglucosamine mutase (447 aa).

Ser-102 functions as the Phosphoserine intermediate in the catalytic mechanism. 4 residues coordinate Mg(2+): Ser-102, Asp-241, Asp-243, and Asp-245. Phosphoserine is present on Ser-102.

It belongs to the phosphohexose mutase family. It depends on Mg(2+) as a cofactor. In terms of processing, activated by phosphorylation.

It catalyses the reaction alpha-D-glucosamine 1-phosphate = D-glucosamine 6-phosphate. Functionally, catalyzes the conversion of glucosamine-6-phosphate to glucosamine-1-phosphate. The sequence is that of Phosphoglucosamine mutase from Hamiltonella defensa subsp. Acyrthosiphon pisum (strain 5AT).